Here is a 381-residue protein sequence, read N- to C-terminus: N-acetyldiaminopimelate deacetylase (381 aa).

Aspartate 73 is an active-site residue. The active-site Proton acceptor is the glutamate 132.

This sequence belongs to the peptidase M20A family. N-acetyldiaminopimelate deacetylase subfamily.

It carries out the reaction N-acetyl-(2S,6S)-2,6-diaminopimelate + H2O = (2S,6S)-2,6-diaminopimelate + acetate. The protein operates within amino-acid biosynthesis; L-lysine biosynthesis via DAP pathway; LL-2,6-diaminopimelate from (S)-tetrahydrodipicolinate (acetylase route): step 3/3. Catalyzes the conversion of N-acetyl-diaminopimelate to diaminopimelate and acetate. This chain is N-acetyldiaminopimelate deacetylase, found in Limosilactobacillus reuteri (strain DSM 20016) (Lactobacillus reuteri).